The chain runs to 892 residues: Protein BNI4 (892 aa).

Residues S43 and S133 each carry the phosphoserine modification. Disordered regions lie at residues 185–287 (DFLS…EDTS) and 305–387 (KPVI…QDTE). Residues 208–223 (TILERDNNLPVKREEN) are compositionally biased toward basic and acidic residues. Composition is skewed to polar residues over residues 224 to 236 (TIIN…TTHS) and 270 to 280 (DSSAQRTTSAG). At S281 the chain carries Phosphoserine. Positions 309–335 (GNNSVTNEKNKMSSSSTFSMNIQTSLK) are enriched in polar residues. The span at 346 to 356 (SSSSIFNSFLK) shows a compositional bias: low complexity. The segment covering 357 to 371 (GKIETSDSPRKEPMR) has biased composition (basic and acidic residues). S364 and S394 each carry phosphoserine. Phosphothreonine is present on T410. Residues S476, S500, and S503 each carry the phosphoserine modification. 3 disordered regions span residues 506–526 (RTRS…RSLT), 618–644 (SDEE…SERQ), and 685–734 (YATE…GDER). S618 is subject to Phosphoserine. A compositionally biased stretch (basic and acidic residues) spans 624 to 643 (EVERDVPKPREEPLKKDSER). Residue T703 is modified to Phosphothreonine. Positions 707–719 (RNNKEDSYKERET) are enriched in basic and acidic residues. Phosphoserine is present on residues S746 and S825.

As to quaternary structure, may interact with CHS3 and seems to be an adapter (along with SKT5) to link CHS3 to septins.

This Saccharomyces cerevisiae (strain ATCC 204508 / S288c) (Baker's yeast) protein is Protein BNI4 (BNI4).